We begin with the raw amino-acid sequence, 394 residues long: Carbamoyl phosphate synthase small chain (394 aa).

Residues methionine 1–arginine 188 are CPSase. L-glutamine-binding residues include serine 49, glycine 240, and glycine 242. The region spanning arginine 192–glycine 379 is the Glutamine amidotransferase type-1 domain. Catalysis depends on cysteine 267, which acts as the Nucleophile. Residues leucine 268, glutamine 271, asparagine 309, glycine 311, and tyrosine 312 each coordinate L-glutamine. Active-site residues include histidine 352 and glutamate 354.

This sequence belongs to the CarA family. In terms of assembly, composed of two chains; the small (or glutamine) chain promotes the hydrolysis of glutamine to ammonia, which is used by the large (or ammonia) chain to synthesize carbamoyl phosphate. Tetramer of heterodimers (alpha,beta)4.

It catalyses the reaction hydrogencarbonate + L-glutamine + 2 ATP + H2O = carbamoyl phosphate + L-glutamate + 2 ADP + phosphate + 2 H(+). The enzyme catalyses L-glutamine + H2O = L-glutamate + NH4(+). The protein operates within amino-acid biosynthesis; L-arginine biosynthesis; carbamoyl phosphate from bicarbonate: step 1/1. It functions in the pathway pyrimidine metabolism; UMP biosynthesis via de novo pathway; (S)-dihydroorotate from bicarbonate: step 1/3. Its function is as follows. Small subunit of the glutamine-dependent carbamoyl phosphate synthetase (CPSase). CPSase catalyzes the formation of carbamoyl phosphate from the ammonia moiety of glutamine, carbonate, and phosphate donated by ATP, constituting the first step of 2 biosynthetic pathways, one leading to arginine and/or urea and the other to pyrimidine nucleotides. The small subunit (glutamine amidotransferase) binds and cleaves glutamine to supply the large subunit with the substrate ammonia. In Deinococcus radiodurans (strain ATCC 13939 / DSM 20539 / JCM 16871 / CCUG 27074 / LMG 4051 / NBRC 15346 / NCIMB 9279 / VKM B-1422 / R1), this protein is Carbamoyl phosphate synthase small chain.